A 239-amino-acid chain; its full sequence is Purine nucleoside phosphorylase DeoD-type (239 aa).

Histidine 5 contacts a purine D-ribonucleoside. Residues glycine 21, arginine 25, arginine 44, and 88–91 (RVGS) each bind phosphate. A purine D-ribonucleoside is bound by residues 180-182 (EME) and 204-205 (SD). Residue aspartate 205 is the Proton donor of the active site.

This sequence belongs to the PNP/UDP phosphorylase family. Homohexamer; trimer of homodimers.

It carries out the reaction a purine D-ribonucleoside + phosphate = a purine nucleobase + alpha-D-ribose 1-phosphate. It catalyses the reaction a purine 2'-deoxy-D-ribonucleoside + phosphate = a purine nucleobase + 2-deoxy-alpha-D-ribose 1-phosphate. Its function is as follows. Catalyzes the reversible phosphorolytic breakdown of the N-glycosidic bond in the beta-(deoxy)ribonucleoside molecules, with the formation of the corresponding free purine bases and pentose-1-phosphate. This chain is Purine nucleoside phosphorylase DeoD-type, found in Salmonella choleraesuis (strain SC-B67).